Reading from the N-terminus, the 482-residue chain is Chitobiosyldiphosphodolichol beta-mannosyltransferase (482 aa).

Over 1–2 (MA) the chain is Lumenal. The helical transmembrane segment at 3 to 23 (ASCVALLVLALLLLVLLLGLW) threads the bilayer. Over 24-99 (KRGRQTGRAR…DLRGLGAGPR (76 aa)) the chain is Cytoplasmic. The segment at residues 100 to 120 (ILQYGVKVVFQAVYLLWKMMR) is an intramembrane region (helical). The Cytoplasmic segment spans residues 121 to 482 (MDPAAYIFLQ…PCGHPSCRGF (362 aa)). S242 bears the Phosphoserine mark.

This sequence belongs to the glycosyltransferase group 1 family. Glycosyltransferase 33 subfamily.

Its subcellular location is the endoplasmic reticulum membrane. It catalyses the reaction an N,N'-diacetylchitobiosyl-diphospho-di-trans,poly-cis-dolichol + GDP-alpha-D-mannose = a beta-D-Man-(1-&gt;4)-beta-D-GlcNAc-(1-&gt;4)-alpha-D-GlcNAc-diphospho-di-trans,poly-cis-dolichol + GDP + H(+). The protein operates within protein modification; protein glycosylation. Mannosyltransferase that operates in the biosynthetic pathway of dolichol-linked oligosaccharides, the glycan precursors employed in protein asparagine (N)-glycosylation. The assembly of dolichol-linked oligosaccharides begins on the cytosolic side of the endoplasmic reticulum membrane and finishes in its lumen. The sequential addition of sugars to dolichol pyrophosphate produces dolichol-linked oligosaccharides containing fourteen sugars, including two GlcNAcs, nine mannoses and three glucoses. Once assembled, the oligosaccharide is transferred from the lipid to nascent proteins by oligosaccharyltransferases. Catalyzes, on the cytoplasmic face of the endoplasmic reticulum, the addition of the first mannose residues to the dolichol-linked oligosaccharide chain, to produce Man1GlcNAc(2)-PP-dolichol core oligosaccharide. Man1GlcNAc(2)-PP-dolichol is a substrate for ALG2, the following enzyme in the biosynthetic pathway. This Mus musculus (Mouse) protein is Chitobiosyldiphosphodolichol beta-mannosyltransferase.